Here is a 202-residue protein sequence, read N- to C-terminus: N-(5'-phosphoribosyl)anthranilate isomerase (202 aa).

This sequence belongs to the TrpF family.

It catalyses the reaction N-(5-phospho-beta-D-ribosyl)anthranilate = 1-(2-carboxyphenylamino)-1-deoxy-D-ribulose 5-phosphate. The protein operates within amino-acid biosynthesis; L-tryptophan biosynthesis; L-tryptophan from chorismate: step 3/5. This Listeria monocytogenes serovar 1/2a (strain ATCC BAA-679 / EGD-e) protein is N-(5'-phosphoribosyl)anthranilate isomerase.